Reading from the N-terminus, the 120-residue chain is Large ribosomal subunit protein uL18 (120 aa).

The tract at residues 1–23 is disordered; it reads MKLSRKESVRRRHQRVRRKINGT. Residues 8 to 20 show a composition bias toward basic residues; sequence SVRRRHQRVRRKI.

It belongs to the universal ribosomal protein uL18 family. As to quaternary structure, part of the 50S ribosomal subunit; part of the 5S rRNA/L5/L18/L25 subcomplex. Contacts the 5S and 23S rRNAs.

Functionally, this is one of the proteins that bind and probably mediate the attachment of the 5S RNA into the large ribosomal subunit, where it forms part of the central protuberance. The chain is Large ribosomal subunit protein uL18 from Microcystis aeruginosa (strain NIES-843 / IAM M-2473).